We begin with the raw amino-acid sequence, 305 residues long: Virulence plasmid integrase pGP7-D (305 aa).

The Core-binding (CB) domain maps to 13–99; sequence LTFGDASEIW…CYISFTKFLY (87 aa). Positions 127–305 constitute a Tyr recombinase domain; the sequence is IKTESISKQE…SPLVQTPPIL (179 aa). Residues Lys188 and Arg257 contribute to the active site. Tyr289 functions as the O-(3'-phospho-DNA)-tyrosine intermediate in the catalytic mechanism.

This sequence belongs to the 'phage' integrase family.

The protein is Virulence plasmid integrase pGP7-D of Chlamydia trachomatis serovar L2 (strain ATCC VR-902B / DSM 19102 / 434/Bu).